Here is a 416-residue protein sequence, read N- to C-terminus: Histidinol dehydrogenase (416 aa).

Tyrosine 117, glutamine 178, and asparagine 201 together coordinate NAD(+). Residues threonine 224, glutamine 246, and histidine 249 each contribute to the substrate site. Positions 246 and 249 each coordinate Zn(2+). Active-site proton acceptor residues include glutamate 314 and histidine 315. Substrate-binding residues include histidine 315, aspartate 348, glutamate 402, and histidine 407. Zn(2+) is bound at residue aspartate 348. Histidine 407 contributes to the Zn(2+) binding site.

This sequence belongs to the histidinol dehydrogenase family. Zn(2+) serves as cofactor.

The enzyme catalyses L-histidinol + 2 NAD(+) + H2O = L-histidine + 2 NADH + 3 H(+). Its pathway is amino-acid biosynthesis; L-histidine biosynthesis; L-histidine from 5-phospho-alpha-D-ribose 1-diphosphate: step 9/9. Functionally, catalyzes the sequential NAD-dependent oxidations of L-histidinol to L-histidinaldehyde and then to L-histidine. This chain is Histidinol dehydrogenase, found in Staphylococcus aureus (strain bovine RF122 / ET3-1).